Here is a 93-residue protein sequence, read N- to C-terminus: Putative defensin-like protein 190 (93 aa).

An N-terminal signal peptide occupies residues 1-30; sequence MKMAKAAATNDFGFITCLVIFLVLAGISNG. Disulfide bonds link Cys39–Cys89, Cys55–Cys75, Cys60–Cys84, and Cys64–Cys86.

It belongs to the DEFL family.

It is found in the secreted. The protein is Putative defensin-like protein 190 of Arabidopsis thaliana (Mouse-ear cress).